The chain runs to 242 residues: EF-hand domain-containing protein D2 (242 aa).

The interval 1–53 (MATDELASKLSRRLQMEGEGGGEAPEQPGLNGAAAAAAAAGAPDETAEALGSA) is disordered. Position 2 is an N-acetylalanine (Ala2). A Phosphoserine modification is found at Ser11. Residues 32–42 (GAAAAAAAAGA) are compositionally biased toward low complexity. Phosphoserine is present on residues Ser76 and Ser78. Residue Tyr85 is modified to Phosphotyrosine. 2 EF-hand domains span residues 94–129 (KQIK…LGAP) and 130–165 (QTHL…AAAG). 8 residues coordinate Ca(2+): Asp107, Asp111, Glu118, Asp143, Asp145, Asp147, Lys149, and Glu154. Lys235 carries the N6-acetyllysine modification.

Interacts with CASP9; with inactive form.

It is found in the membrane raft. Its function is as follows. May regulate B-cell receptor (BCR)-induced immature and primary B-cell apoptosis. Plays a role as negative regulator of the canonical NF-kappa-B-activating branch. Controls spontaneous apoptosis through the regulation of BCL2L1 abundance. The sequence is that of EF-hand domain-containing protein D2 (EFHD2) from Bos taurus (Bovine).